The following is a 103-amino-acid chain: Small ribosomal subunit protein uS10 (103 aa).

Belongs to the universal ribosomal protein uS10 family. As to quaternary structure, part of the 30S ribosomal subunit.

Its function is as follows. Involved in the binding of tRNA to the ribosomes. The sequence is that of Small ribosomal subunit protein uS10 from Leptothrix cholodnii (strain ATCC 51168 / LMG 8142 / SP-6) (Leptothrix discophora (strain SP-6)).